The primary structure comprises 234 residues: BTB/POZ domain-containing protein KCTD5 (234 aa).

Residue A2 is modified to N-acetylalanine. One can recognise a BTB domain in the interval 44–146 (KWVRLNVGGT…LVKDKIRERD (103 aa)). The interval 211–234 (NSPHGPASEPSEKAKILQERGSRM) is disordered. Basic and acidic residues predominate over residues 220-234 (PSEKAKILQERGSRM).

Homopentamer. Interacts (via C-terminus) with GRASP55/GORASP2. Interacts with CUL3 and with ubiquitinated proteins. Interacts with CRY1.

The protein localises to the cytoplasm. The protein resides in the cytosol. It localises to the nucleus. Its interaction with CUL3 suggests that it may act as a substrate adapter in some E3 ligase complex. Does not affect the function of Kv channel Kv2.1/KCNB1, Kv1.2/KCNA2, Kv4.2/KCND2 and Kv3.4/KCNC4. The protein is BTB/POZ domain-containing protein KCTD5 (KCTD5) of Bos taurus (Bovine).